The sequence spans 455 residues: Venom prothrombin activator nigrarin-D (455 aa).

The first 20 residues, 1–20, serve as a signal peptide directing secretion; it reads MAPPLLLCLILTFLWNLPEA. The propeptide occupies 21–40; sequence ESNVFLKSKVANRFLQRTKR. One can recognise a Gla domain in the interval 41 to 86; that stretch reads SNSIFEEFKAGNIERECIEEKCSKEEAREVFEDNEKTETFWNVYVD. 11 positions are modified to 4-carboxyglutamate: glutamate 46, glutamate 47, glutamate 54, glutamate 56, glutamate 59, glutamate 60, glutamate 65, glutamate 66, glutamate 69, glutamate 72, and glutamate 75. A disulfide bridge connects residues cysteine 57 and cysteine 62. An EGF-like 1; calcium-binding domain is found at 86 to 122; it reads DGDQCSSNPCHYRGTCKDGIGSYTCTCLPNYEGKNCE. Disulfide bonds link cysteine 90/cysteine 101, cysteine 95/cysteine 110, cysteine 112/cysteine 121, cysteine 129/cysteine 140, cysteine 136/cysteine 149, cysteine 151/cysteine 164, cysteine 172/cysteine 328, cysteine 216/cysteine 221, cysteine 236/cysteine 252, cysteine 376/cysteine 390, and cysteine 401/cysteine 429. Serine 92 carries an O-linked (Hex...) serine glycan. The EGF-like 2 domain maps to 129–164; sequence CRVFNGNCWHFCKSVQNEIQCSCAESYRLGDDGHSC. The propeptide at 182-209 is activation peptide; it reads REASLPDFVQSQKAILLKKSDNPSPDIR. Residues 210-453 form the Peptidase S1 domain; it reads IINGMDCKLG…FIPWIKAIMS (244 aa). Histidine 251 (charge relay system) is an active-site residue. An N-linked (GlcNAc...) asparagine glycan is attached at asparagine 254. Aspartate 308 serves as the catalytic Charge relay system. The active-site Charge relay system is serine 405.

Belongs to the peptidase S1 family. Snake venom subfamily. In terms of assembly, heterodimer of a light chain and a heavy chain; disulfide-linked. In terms of processing, the vitamin K-dependent, enzymatic carboxylation of some glutamate residues allows the modified protein to bind calcium. As to expression, expressed by the venom gland.

It is found in the secreted. It catalyses the reaction Selective cleavage of Arg-|-Thr and then Arg-|-Ile bonds in prothrombin to form thrombin.. Functionally, snake prothrombin activator that attacks the hemostatic system of prey. This protein is functionally similar to blood coagulation factor Xa. This Cryptophis nigrescens (Eastern small-eyed snake) protein is Venom prothrombin activator nigrarin-D.